We begin with the raw amino-acid sequence, 342 residues long: S-adenosylmethionine:tRNA ribosyltransferase-isomerase (342 aa).

This sequence belongs to the QueA family. In terms of assembly, monomer.

The protein resides in the cytoplasm. It catalyses the reaction 7-aminomethyl-7-carbaguanosine(34) in tRNA + S-adenosyl-L-methionine = epoxyqueuosine(34) in tRNA + adenine + L-methionine + 2 H(+). Its pathway is tRNA modification; tRNA-queuosine biosynthesis. Functionally, transfers and isomerizes the ribose moiety from AdoMet to the 7-aminomethyl group of 7-deazaguanine (preQ1-tRNA) to give epoxyqueuosine (oQ-tRNA). The protein is S-adenosylmethionine:tRNA ribosyltransferase-isomerase of Bacillus pumilus (strain SAFR-032).